Here is a 222-residue protein sequence, read N- to C-terminus: Superoxide dismutase [Mn], mitochondrial (222 aa).

Residues 1–24 (MLCRAACSTGRRLGPVAGAAGSRH) constitute a mitochondrion transit peptide. H50 is a binding site for Mn(2+). The residue at position 58 (Y58) is a 3'-nitrotyrosine. Residues K68 and K75 each carry the N6-acetyllysine; alternate modification. 2 positions are modified to N6-succinyllysine; alternate: K68 and K75. H98 is a Mn(2+) binding site. K114 carries the N6-acetyllysine modification. Residues K122 and K130 each carry the N6-acetyllysine; alternate modification. Residues K122 and K130 each carry the N6-succinyllysine; alternate modification. Mn(2+)-binding residues include D183 and H187. K202 is subject to N6-acetyllysine.

The protein belongs to the iron/manganese superoxide dismutase family. In terms of assembly, homotetramer. The cofactor is Mn(2+). Nitrated under oxidative stress. Nitration coupled with oxidation inhibits the catalytic activity. Post-translationally, acetylation at Lys-122 decreases enzymatic activity. Deacetylated by SIRT3 upon exposure to ionizing radiations or after long fasting. In terms of processing, polyubiquitinated; leading to proteasomal degradation. Deubiquitinated by USP36 which increases protein stability.

It localises to the mitochondrion matrix. It carries out the reaction 2 superoxide + 2 H(+) = H2O2 + O2. Functionally, destroys superoxide anion radicals which are normally produced within the cells and which are toxic to biological systems. This Mus musculus (Mouse) protein is Superoxide dismutase [Mn], mitochondrial (Sod2).